A 233-amino-acid polypeptide reads, in one-letter code: 2,3,4,5-tetrahydropyridine-2,6-dicarboxylate N-acetyltransferase (233 aa).

The protein belongs to the transferase hexapeptide repeat family. DapH subfamily.

The enzyme catalyses (S)-2,3,4,5-tetrahydrodipicolinate + acetyl-CoA + H2O = L-2-acetamido-6-oxoheptanedioate + CoA. Its pathway is amino-acid biosynthesis; L-lysine biosynthesis via DAP pathway; LL-2,6-diaminopimelate from (S)-tetrahydrodipicolinate (acetylase route): step 1/3. Functionally, catalyzes the transfer of an acetyl group from acetyl-CoA to tetrahydrodipicolinate. This is 2,3,4,5-tetrahydropyridine-2,6-dicarboxylate N-acetyltransferase from Thermotoga sp. (strain RQ2).